The following is a 637-amino-acid chain: tRNA uridine 5-carboxymethylaminomethyl modification enzyme MnmG (637 aa).

FAD is bound by residues 15–20 (GAGHAG), isoleucine 127, and serine 182. 276 to 290 (GPRYCPSIEDKIVRF) is a binding site for NAD(+). Glutamine 373 provides a ligand contact to FAD.

It belongs to the MnmG family. As to quaternary structure, homodimer. Heterotetramer of two MnmE and two MnmG subunits. FAD serves as cofactor.

The protein localises to the cytoplasm. In terms of biological role, NAD-binding protein involved in the addition of a carboxymethylaminomethyl (cmnm) group at the wobble position (U34) of certain tRNAs, forming tRNA-cmnm(5)s(2)U34. This Streptococcus pneumoniae serotype 4 (strain ATCC BAA-334 / TIGR4) protein is tRNA uridine 5-carboxymethylaminomethyl modification enzyme MnmG.